We begin with the raw amino-acid sequence, 466 residues long: Cysteine--tRNA ligase (466 aa).

C28 is a Zn(2+) binding site. A 'HIGH' region motif is present at residues 30-40; that stretch reads PTVYNFFHIGN. Zn(2+)-binding residues include C208, H233, and E237. Positions 265–269 match the 'KMSKS' region motif; the sequence is KMSKS. K268 lines the ATP pocket.

It belongs to the class-I aminoacyl-tRNA synthetase family. In terms of assembly, monomer. It depends on Zn(2+) as a cofactor.

The protein resides in the cytoplasm. The catalysed reaction is tRNA(Cys) + L-cysteine + ATP = L-cysteinyl-tRNA(Cys) + AMP + diphosphate. This is Cysteine--tRNA ligase from Clostridium perfringens (strain ATCC 13124 / DSM 756 / JCM 1290 / NCIMB 6125 / NCTC 8237 / Type A).